The sequence spans 608 residues: Fatty acid amide hydrolase (608 aa).

Catalysis depends on charge relay system residues K206 and S282. A substrate-binding site is contributed by 303-306; it reads GGGS. The Acyl-ester intermediate role is filled by S306.

Belongs to the amidase family. As to quaternary structure, forms homodimers.

Its subcellular location is the endoplasmic reticulum membrane. The protein localises to the cell membrane. It carries out the reaction N-(9Z,12Z-octadecadienoyl)-ethanolamine + H2O = ethanolamine + (9Z,12Z)-octadecadienoate. The catalysed reaction is N-hexadecanoylethanolamine + H2O = ethanolamine + hexadecanoate. The enzyme catalyses N-dodecanoylethanolamine + H2O = dodecanoate + ethanolamine. Inhibited by methyl arachidonyl fluorophosphonate (MAFP). In terms of biological role, catalyzes the hydrolysis of bioactive endogenous fatty acid amides to their corresponding acids. The hydrolysis of endogenous amidated lipids terminates their participation as lipid mediators in various signaling systems. Converts a wide range of N-acylethanolamines (NAEs) to their corresponding free fatty acids and ethanolamine. The polypeptide is Fatty acid amide hydrolase (Oryza sativa subsp. japonica (Rice)).